We begin with the raw amino-acid sequence, 620 residues long: uncharacterized protein (620 aa).

4 helical membrane passes run 66–86 (LLNF…NQII), 238–258 (FFDA…NLLW), 546–566 (LGII…VWTI), and 584–604 (IIFI…ILVF).

Its subcellular location is the cell membrane. This is an uncharacterized protein from Mycoplasma genitalium (strain ATCC 33530 / DSM 19775 / NCTC 10195 / G37) (Mycoplasmoides genitalium).